The following is a 319-amino-acid chain: Secreted effector protein sopD2 (319 aa).

A Required to target late endocytic compartments motif is present at residues 37 to 44 (WDRFKDCF).

It belongs to the SopD family.

The protein resides in the secreted. The protein localises to the host cell membrane. In terms of biological role, effector proteins function to alter host cell physiology and promote bacterial survival in host tissues. Contributes to the formation of Salmonella-induced filaments (Sifs) in infected epithelial cells and to replication in macrophages. The sequence is that of Secreted effector protein sopD2 (sopD2) from Salmonella typhimurium (strain LT2 / SGSC1412 / ATCC 700720).